Reading from the N-terminus, the 144-residue chain is Large ribosomal subunit protein uL15 (144 aa).

The segment covering 1 to 14 has biased composition (basic residues); sequence MVVRREKKSRKMRG. Residues 1 to 35 are disordered; the sequence is MVVRREKKSRKMRGSRTMGWGIRGQHRDRGSQGGR.

It belongs to the universal ribosomal protein uL15 family. As to quaternary structure, part of the 50S ribosomal subunit.

Functionally, binds to the 23S rRNA. In Saccharolobus solfataricus (strain ATCC 35092 / DSM 1617 / JCM 11322 / P2) (Sulfolobus solfataricus), this protein is Large ribosomal subunit protein uL15.